Reading from the N-terminus, the 420-residue chain is Gamma-glutamyl phosphate reductase (420 aa).

It belongs to the gamma-glutamyl phosphate reductase family.

The protein localises to the cytoplasm. It carries out the reaction L-glutamate 5-semialdehyde + phosphate + NADP(+) = L-glutamyl 5-phosphate + NADPH + H(+). It functions in the pathway amino-acid biosynthesis; L-proline biosynthesis; L-glutamate 5-semialdehyde from L-glutamate: step 2/2. Functionally, catalyzes the NADPH-dependent reduction of L-glutamate 5-phosphate into L-glutamate 5-semialdehyde and phosphate. The product spontaneously undergoes cyclization to form 1-pyrroline-5-carboxylate. In Streptococcus pneumoniae (strain Hungary19A-6), this protein is Gamma-glutamyl phosphate reductase.